The chain runs to 408 residues: MQRIENINAATMTDDKGYGLIQDATVIINKGKIEFVGAAFDAPATPTAEVIDGNGGLLTPGLIDCHTHLVWAGSRANEFAQRLHGASYQEIAEQGGGIKSTVKATREASAEELLTLALERAETLMSQGVTTIEVKSGYGLDLENERKQLTVARQLAEQLPVNIKTTLLAAHAVPPEFKDNADGYIEEIIQNILPTLANEGLVDAVDAFCESIGFSPAQTEKVFKTAKDLELPIKLHAEQITNQKGAKLAADYQALSADHLEQLDEEGVKAMAENGTVAVLLPGAFYFLRDTQKPPVELLRKHGVPMAIATDANPGSSPIHNLPLMLQMAATFFHMTPEECLRGVTVNAAKALGENQRGVIAEGCYADLALWSCKDAAELTYQFGVNPLKTLWFNGVAHDRVSKPWSAR.

Fe(3+) is bound by residues H66 and H68. Residues H66 and H68 each coordinate Zn(2+). 4-imidazolone-5-propanoate-binding residues include R75, Y138, and H171. Y138 is an N-formimidoyl-L-glutamate binding site. H236 lines the Fe(3+) pocket. H236 lines the Zn(2+) pocket. Q239 contributes to the 4-imidazolone-5-propanoate binding site. Fe(3+) is bound at residue D311. A Zn(2+)-binding site is contributed by D311. 2 residues coordinate N-formimidoyl-L-glutamate: N313 and G315. S316 is a 4-imidazolone-5-propanoate binding site.

It belongs to the metallo-dependent hydrolases superfamily. HutI family. Zn(2+) serves as cofactor. Fe(3+) is required as a cofactor.

The protein resides in the cytoplasm. It catalyses the reaction 4-imidazolone-5-propanoate + H2O = N-formimidoyl-L-glutamate. The protein operates within amino-acid degradation; L-histidine degradation into L-glutamate; N-formimidoyl-L-glutamate from L-histidine: step 3/3. Functionally, catalyzes the hydrolytic cleavage of the carbon-nitrogen bond in imidazolone-5-propanoate to yield N-formimidoyl-L-glutamate. It is the third step in the universal histidine degradation pathway. This Idiomarina loihiensis (strain ATCC BAA-735 / DSM 15497 / L2-TR) protein is Imidazolonepropionase.